The chain runs to 197 residues: Ras-related protein Rab-7B (197 aa).

GTP is bound by residues 14 to 21, 33 to 38, 57 to 61, 119 to 122, and 152 to 153; these read GEKSVGKT, VTLKPT, DTSGQ, NKID, and AK. The Effector region signature appears at 31 to 39; the sequence is RFVTLKPTI. 2 S-geranylgeranyl cysteine lipidation sites follow: Cys196 and Cys197.

Belongs to the small GTPase superfamily. Rab family.

Protein transport. Probably involved in vesicular traffic. This Dictyostelium discoideum (Social amoeba) protein is Ras-related protein Rab-7B (rab7B).